We begin with the raw amino-acid sequence, 494 residues long: Glycerol kinase (494 aa).

Thr-13 contacts ADP. Residues Thr-13, Thr-14, and Ser-15 each contribute to the ATP site. Thr-13 is a sn-glycerol 3-phosphate binding site. Arg-17 serves as a coordination point for ADP. The sn-glycerol 3-phosphate site is built by Arg-83, Glu-84, Tyr-135, and Asp-244. Arg-83, Glu-84, Tyr-135, Asp-244, and Gln-245 together coordinate glycerol. The ADP site is built by Thr-266 and Gly-309. Residues Thr-266, Gly-309, Gln-313, and Gly-410 each contribute to the ATP site. 2 residues coordinate ADP: Gly-410 and Asn-414.

The protein belongs to the FGGY kinase family.

The enzyme catalyses glycerol + ATP = sn-glycerol 3-phosphate + ADP + H(+). It participates in polyol metabolism; glycerol degradation via glycerol kinase pathway; sn-glycerol 3-phosphate from glycerol: step 1/1. With respect to regulation, inhibited by fructose 1,6-bisphosphate (FBP). Functionally, key enzyme in the regulation of glycerol uptake and metabolism. Catalyzes the phosphorylation of glycerol to yield sn-glycerol 3-phosphate. The sequence is that of Glycerol kinase from Shewanella sp. (strain MR-7).